Here is a 324-residue protein sequence, read N- to C-terminus: AT-hook motif nuclear-localized protein 24 (324 aa).

Over residues 1-12 the composition is skewed to polar residues; it reads MDPVQSHGSQSS. 2 disordered regions span residues 1 to 122 and 262 to 324; these read MDPV…KPPI and MQTP…RPPY. A compositionally biased stretch (low complexity) spans 24–33; it reads LHLQQQQQEF. Residues 69-79 are compositionally biased toward polar residues; sequence NIDNIANNSGS. Gly residues predominate over residues 88–99; sequence GGSGEGGGGSGG. The a.T hook DNA-binding region spans 105 to 117; sequence RRPRGRPAGSKNK. The region spanning 129–268 is the PPC domain; that stretch reads ANALRTHVME…EDEMQTPVHG (140 aa). The span at 280 to 297 shows a compositional bias: low complexity; the sequence is MMGQQLQHQQQAMSGHQG. Positions 304 to 318 are enriched in polar residues; sequence GSVQLQQQHDQSYWS.

The protein resides in the nucleus. In terms of biological role, transcription factor that specifically binds AT-rich DNA sequences related to the nuclear matrix attachment regions (MARs). In Arabidopsis thaliana (Mouse-ear cress), this protein is AT-hook motif nuclear-localized protein 24.